The sequence spans 218 residues: GCN5-related N-acetyltransferase 9 (218 aa).

The region spanning 36–183 (SALLEATGSE…KEVTLEYPVT (148 aa)) is the N-acetyltransferase domain. Residues 112–114 (MIA), 120–125 (GKGLGK), 152–154 (NTA), and F159 contribute to the acetyl-CoA site.

Belongs to the acetyltransferase family. GNAT subfamily. Oligomer. Expressed throughout the plant.

The protein localises to the cytoplasm. It is found in the nucleus. It carries out the reaction an N-terminal L-alpha-aminoacyl-[protein] + acetyl-CoA = N-terminal N(alpha)-acetyl-L-alpha-aminoacyl-[protein] + CoA + H(+). The catalysed reaction is L-lysyl-[protein] + acetyl-CoA = N(6)-acetyl-L-lysyl-[protein] + CoA + H(+). Probable protein acetyltransferase with dual specificity triggering both N-alpha-acetylation (NTA) and epsilon-lysine acetylation (KA). The polypeptide is GCN5-related N-acetyltransferase 9 (Arabidopsis thaliana (Mouse-ear cress)).